Reading from the N-terminus, the 473-residue chain is tRNA modification GTPase MnmE (473 aa).

(6S)-5-formyl-5,6,7,8-tetrahydrofolate is bound by residues arginine 30, glutamate 95, and arginine 134. In terms of domain architecture, TrmE-type G spans 230-394 (GVSTVIAGRP…LKLLMASMVE (165 aa)). GTP is bound by residues 240-245 (NAGKST), 259-265 (SHMPGTT), and 284-287 (DTAG). Positions 244 and 265 each coordinate Mg(2+). Lysine 473 is a binding site for (6S)-5-formyl-5,6,7,8-tetrahydrofolate.

The protein belongs to the TRAFAC class TrmE-Era-EngA-EngB-Septin-like GTPase superfamily. TrmE GTPase family. In terms of assembly, homodimer. Heterotetramer of two MnmE and two MnmG subunits. K(+) is required as a cofactor.

Its subcellular location is the cytoplasm. Functionally, exhibits a very high intrinsic GTPase hydrolysis rate. Involved in the addition of a carboxymethylaminomethyl (cmnm) group at the wobble position (U34) of certain tRNAs, forming tRNA-cmnm(5)s(2)U34. This chain is tRNA modification GTPase MnmE, found in Chlorobium luteolum (strain DSM 273 / BCRC 81028 / 2530) (Pelodictyon luteolum).